Consider the following 156-residue polypeptide: RNA polymerase sigma factor SigS (156 aa).

The Polymerase core binding motif lies at 29–44 (EYYQLLLIKMWQLSQI). A DNA-binding region (H-T-H motif) is located at residues 126–145 (QFEIAEIMSLSLSTIKLIKT).

It belongs to the sigma-70 factor family.

Sigma factors are initiation factors that promote the attachment of RNA polymerase to specific initiation sites and are then released. Sigma-S contributes to the protection against external stress, thus playing a role in cellular fitness and survival. The polypeptide is RNA polymerase sigma factor SigS (sigS) (Staphylococcus aureus (strain bovine RF122 / ET3-1)).